The sequence spans 1398 residues: DNA topoisomerase 2 (1398 aa).

ATP contacts are provided by residues N69, N103, 131–133 (SDN), and 144–151 (GRNGFGAK). The disordered stretch occupies residues 260–317 (NSNDNKNNKGQNDNNNNNNNNNDENANQNNDNLDVSLSNEPADGTPTKNNNNNNNNND). Over residues 267-291 (NKGQNDNNNNNNNNNDENANQNNDN) the composition is skewed to low complexity. Residue 411–413 (QTK) participates in ATP binding. A Toprim domain is found at 493-608 (CTLILTEGDS…SLLKHKGFLS (116 aa)). Mg(2+) contacts are provided by E499, D577, and D579. The 453-residue stretch at 739-1191 (IPNIMDGWKP…TVETMWLKDI (453 aa)) folds into the Topo IIA-type catalytic domain. Y830 acts as the O-(5'-phospho-DNA)-tyrosine intermediate in catalysis. The interaction with DNA stretch occupies residues 1012–1021 (KLKSTLTTTN). 2 disordered regions span residues 1214–1250 (KFKV…SDSS) and 1262–1361 (NTNK…NSSI). A compositionally biased stretch (low complexity) spans 1262 to 1276 (NTNKKTTTSSNNVNN). 2 stretches are compositionally biased toward polar residues: residues 1287-1300 (LNSN…SVSK) and 1348-1357 (DSTNDNNSEL).

It belongs to the type II topoisomerase family. As to quaternary structure, homodimer. Mg(2+) serves as cofactor. Mn(2+) is required as a cofactor. It depends on Ca(2+) as a cofactor.

It localises to the nucleus. It catalyses the reaction ATP-dependent breakage, passage and rejoining of double-stranded DNA.. Functionally, control of topological states of DNA by transient breakage and subsequent rejoining of DNA strands. Topoisomerase II makes double-strand breaks. The sequence is that of DNA topoisomerase 2 (TOP2) from Plasmodium falciparum (isolate K1 / Thailand).